The chain runs to 1195 residues: Probable beta-tubulin polyglutamylase (1195 aa).

The segment at 1–110 is disordered; that stretch reads MSQKDIYNKY…QTEMTDNQNE (110 aa). Composition is skewed to acidic residues over residues 17–27 and 44–79; these read DQQEEDDDENQ and QGED…EENN. Coiled-coil stretches lie at residues 59-103 and 144-260; these read DEEQ…QQTE and QDMD…QSEQ. Residues 80–89 are compositionally biased toward low complexity; that stretch reads QDQQNNSESN. Positions 90 to 110 are enriched in polar residues; that stretch reads LQYDKTNQKNQQTEMTDNQNE. Residues 281–343 are disordered; it reads PKNDVDQYTG…NKKEQAKKQQ (63 aa). A compositionally biased stretch (acidic residues) spans 294–316; that stretch reads DSGESDEEANNEDDDEDEDDESE. Residues 322 to 334 are compositionally biased toward basic residues; that stretch reads RKNKAQLLKKKNN. One can recognise a TTL domain in the interval 350–703; that stretch reads KQTLVLNVAD…TCKAKNEIIN (354 aa). Residues 500–503, Lys-513, and Asp-515 contribute to the ATP site; that span reads QRYL. Residues 674–756 are c-MTBD region; it reads PLDSYIKKNT…GFERIFPMED (83 aa). The tract at residues 783–862 is disordered; the sequence is RNTKKVTEDP…ETIQCEDQEQ (80 aa). Polar residues predominate over residues 825-849; it reads PNSQTTINKGIPGQNGQRPSSSQLN. Positions 850-860 are enriched in acidic residues; that stretch reads EEGETIQCEDQ.

Its subcellular location is the cytoplasm. It is found in the cytoskeleton. The protein localises to the cell projection. It localises to the cilium. The protein resides in the cilium basal body. Probable tubulin polyglutamylase with a strong preference for beta-tubulin. This chain is Probable beta-tubulin polyglutamylase (Ttll6a), found in Tetrahymena thermophila (strain SB210).